The primary structure comprises 1078 residues: Extracellular calcium-sensing receptor (1078 aa).

Positions 1-19 are cleaved as a signal peptide; that stretch reads MAFYSCCWVLLALTWHTSA. Over 20–610 the chain is Extracellular; sequence YGPDQRAQKK…KEIEFLSWTE (591 aa). A ligand-binding 1 (LB1) region spans residues 22 to 188; that stretch reads PDQRAQKKGD…QFKSFLRTIP (167 aa). The cysteines at positions 60 and 101 are disulfide-linked. A phosphate-binding site is contributed by 66-70; the sequence is RGFRW. Residues isoleucine 81, serine 84, leucine 87, and leucine 88 each coordinate Ca(2+). N-linked (GlcNAc...) asparagine glycosylation is present at asparagine 90. Threonine 100 contacts Ca(2+). The N-linked (GlcNAc...) asparagine glycan is linked to asparagine 130. A Ca(2+)-binding site is contributed by threonine 145. Residues serine 147, alanine 168, and serine 170 each contribute to the L-tryptophan site. Serine 170, proline 188, aspartate 190, glutamate 231, and aspartate 234 together coordinate Ca(2+). The interval 189-324 is ligand-binding 2 (LB2); it reads NDEHQATAMA…GGTIGFALKA (136 aa). Disulfide bonds link cysteine 236/cysteine 561, cysteine 358/cysteine 395, cysteine 437/cysteine 449, cysteine 542/cysteine 562, cysteine 546/cysteine 565, cysteine 568/cysteine 582, and cysteine 585/cysteine 598. The spermine site is built by aspartate 238 and serine 240. N-linked (GlcNAc...) asparagine glycosylation is found at asparagine 261 and asparagine 287. Glutamate 297 is a Ca(2+) binding site. Glutamate 297 contributes to the L-tryptophan binding site. N-linked (GlcNAc...) asparagine glycans are attached at residues asparagine 386 and asparagine 400. 415-417 provides a ligand contact to phosphate; it reads RIS. Residues asparagine 446, asparagine 468, and asparagine 488 are each glycosylated (N-linked (GlcNAc...) asparagine). Tyrosine 489 contributes to the Ca(2+) binding site. N-linked (GlcNAc...) asparagine glycosylation occurs at asparagine 541. The segment at 542 to 612 is cysteine-rich (CR); it reads CSRDCLAGTR…IEFLSWTEPF (71 aa). Position 557 (glycine 557) interacts with Ca(2+). Asparagine 594 carries N-linked (GlcNAc...) asparagine glycosylation. A helical membrane pass occupies residues 611–636; that stretch reads PFGIALTLFAVLGIFLTAFVLGVFIK. Topologically, residues 637 to 648 are cytoplasmic; sequence FRNTPIVKATNR. Positions 637 to 648 are intracellular loop 1 (ICL1); that stretch reads FRNTPIVKATNR. Residues 649-668 form a helical membrane-spanning segment; that stretch reads ELSYLLLFSLLCCFSSSLFF. The Extracellular segment spans residues 669–674; that stretch reads IGEPQD. Residues 675–698 traverse the membrane as a helical segment; the sequence is WTCRLRQPAFGISFVLCISCILVK. Residues 699–722 are Cytoplasmic-facing; it reads TNRVLLVFEAKIPTSFHRKWWGLN. Residues 699–722 form an intracellular loop 2 (ICL2) region; it reads TNRVLLVFEAKIPTSFHRKWWGLN. The chain crosses the membrane as a helical span at residues 723 to 745; it reads LQFLLVFLCTFMQIVICVIWLYT. Residues 746–769 lie on the Extracellular side of the membrane; that stretch reads APPSSYRNQELEDEIIFITCHEGS. A helical membrane pass occupies residues 770 to 789; the sequence is LMALGFLIGYTCLLAAICFF. The Cytoplasmic portion of the chain corresponds to 790-805; the sequence is FAFKSRKLPENFNEAK. An intracellular loop 3 (ICL3) region spans residues 790–805; the sequence is FAFKSRKLPENFNEAK. Residues 806–828 form a helical membrane-spanning segment; it reads FITFSMLIFFIVWISFIPAYAST. At 829–832 the chain is on the extracellular side; sequence YGKF. Residues 833-854 traverse the membrane as a helical segment; sequence VSAVEVIAILAASFGLLACIFF. The Cytoplasmic segment spans residues 855-1078; it reads NKIYIILFKP…STVTENVVNS (224 aa). A C-terminus region spans residues 855–1078; it reads NKIYIILFKP…STVTENVVNS (224 aa). Residues 880–900 are interaction with RNF19A; that stretch reads AFKVAARATLRRSNVSRKRSS. The residue at position 888 (threonine 888) is a Phosphothreonine; by PKC. An arginine-rich retention motif region spans residues 890-898; sequence RRSNVSRKR. A Phosphoserine; by PKC modification is found at serine 892. Disordered regions lie at residues 892 to 963, 986 to 1006, and 1030 to 1055; these read SNVS…PRCK, AMAH…SSDT, and TGLQ…PALV. Serine 899 bears the Phosphoserine; by PKA mark. The segment covering 900-918 has biased composition (low complexity); sequence SSLGGSTGSTPSSSISSKS. Position 920 is a phosphoserine (serine 920). A compositionally biased stretch (low complexity) spans 932–960; sequence QQQPLALTQQEQQQQPLTLPQQQRSQQQP. Residues 993–1006 show a composition bias toward polar residues; the sequence is THQNSLEAQKSSDT. Phosphoserine is present on serine 1061.

The protein belongs to the G-protein coupled receptor 3 family. As to quaternary structure, homodimer; disulfide-linked. Interacts with VCP. Interacts with ARRB1. Phosphorylation at Thr-888 by PKC impairs coupling with G(q)/G(11) G-proteins, while it does not affect G(i)/G(o)-coupling. Phosphorylation at Ser-892 by PKC and Ser-899 by PKA promote plasma membrane localization. Post-translationally, ubiquitinated by RNF19A; which induces proteasomal degradation. In terms of processing, N-glycosylated. As to expression, expressed in the temporal lobe, frontal lobe, parietal lobe, hippocampus, and cerebellum. Also found in kidney, lung, liver, heart, skeletal muscle, placenta.

It localises to the cell membrane. Its activity is regulated as follows. In resting state, adopts an open conformation, anion-binding promoting the inactive configuration. Upon aromatic amino acid-binding, the groove in the extracellular venus flytrap module is closed, thereby inducing the formation of a novel homodimer interface between subunits. Calcium ions stabilize the active state by enhancing homodimer interactions between membrane-proximal domains to fully activate the receptor. Upon activation, the homodimer adopts an asymmetric configuration of the 7-transmembrane region that primes one protomer for G-protein coupling. G-protein binding expands the transmembrane dimer interface; the restriction imposed by the receptor dimer, in combination with intracellular loop 2 (ICL2), enables G-protein activation by facilitating conformational transition of G-protein alpha. Coupling to different classes of G-proteins results in distinct CASR-G-protein interfaces. Activated by glucose, which acts as a positive allosteric modulator. Activated by positive allosteric modulator drugs cinacalcet, evocalcet and etelcalcetide, which are clinically used for the treatment of hyperparathyroidism and familial hypocalciuric hypercalcemia. Inhibited by NPS-2143, a negative allosteric modulator tested for the treatment of hypocalcemia. Activated by velcalcetide (AMG 416), a D-amino acid-containing peptide agonist that is being evaluated for the treatment of secondary hyperparathyroidism in chronic kidney disease patients receiving hemodialysis. Velcalcetide agonist acts by forming a disulfide bond with Cys-482. Its function is as follows. G-protein-coupled receptor that senses changes in the extracellular concentration of calcium ions and plays a key role in maintaining calcium homeostasis. Senses fluctuations in the circulating calcium concentration: activated by elevated circulating calcium, leading to decreased parathyroid hormone (PTH) secretion in parathyroid glands. In kidneys, acts as a key regulator of renal tubular calcium resorption. Ligand binding causes a conformation change that triggers signaling via guanine nucleotide-binding proteins (G-proteins) and modulates the activity of downstream effectors. CASR is coupled with different G(q)/G(11), G(i)/G(o)- or G(s)-classes of G-proteins depending on the context. In the parathyroid and kidney, CASR signals through G(q)/G(11) and G(i)/G(o) G-proteins: G(q)/G(11) coupling activates phospholipase C-beta, releasing diacylglycerol (DAG) and inositol 1,4,5-trisphosphate (IP3) second messengers, while G(i)/G(o) coupling mediates inhibition of adenylate cyclase activity. The G-protein-coupled receptor activity is activated by a co-agonist mechanism: aromatic amino acids, such as Trp or Phe, act concertedly with divalent cations, such as calcium or magnesium, to achieve full receptor activation. Acts as an activator of the NLRP3 inflammasome via G(i)/G(o)-mediated signaling: down-regulation of cyclic AMP (cAMP) relieving NLRP3 inhibition by cAMP. Acts as a regulator of proton-sensing receptor GPR68 in a seesaw manner: CASR-mediated signaling inhibits GPR68 signaling in response to extracellular calcium, while GPR68 inhibits CASR in presence of extracellular protons. The sequence is that of Extracellular calcium-sensing receptor from Homo sapiens (Human).